A 558-amino-acid polypeptide reads, in one-letter code: Delta-1-pyrroline-5-carboxylate dehydrogenase, mitochondrial (558 aa).

NAD(+)-binding positions include S198, K223, and 276–280 (GSTGV). E306 serves as the catalytic Proton acceptor. C340 acts as the Nucleophile in catalysis. Residue E438 participates in NAD(+) binding.

Belongs to the aldehyde dehydrogenase family.

It localises to the mitochondrion matrix. It carries out the reaction L-glutamate 5-semialdehyde + NAD(+) + H2O = L-glutamate + NADH + 2 H(+). It participates in amino-acid degradation; L-proline degradation into L-glutamate; L-glutamate from L-proline: step 2/2. Irreversible conversion of delta-1-pyrroline-5-carboxylate (P5C), derived either from proline or ornithine, to glutamate. This is a necessary step in the pathway interconnecting the urea and tricarboxylic acid cycles. In Dictyostelium discoideum (Social amoeba), this protein is Delta-1-pyrroline-5-carboxylate dehydrogenase, mitochondrial.